Consider the following 381-residue polypeptide: Probable tRNA sulfurtransferase (381 aa).

Positions 52-155 constitute a THUMP domain; that stretch reads LTNLDALKYV…DASTYIFIDY (104 aa). Residues 173 to 174, 198 to 199, Arg255, Gly277, and Gln286 each bind ATP; these read LM and NF.

Belongs to the ThiI family.

It is found in the cytoplasm. It catalyses the reaction [ThiI sulfur-carrier protein]-S-sulfanyl-L-cysteine + a uridine in tRNA + 2 reduced [2Fe-2S]-[ferredoxin] + ATP + H(+) = [ThiI sulfur-carrier protein]-L-cysteine + a 4-thiouridine in tRNA + 2 oxidized [2Fe-2S]-[ferredoxin] + AMP + diphosphate. The catalysed reaction is [ThiS sulfur-carrier protein]-C-terminal Gly-Gly-AMP + S-sulfanyl-L-cysteinyl-[cysteine desulfurase] + AH2 = [ThiS sulfur-carrier protein]-C-terminal-Gly-aminoethanethioate + L-cysteinyl-[cysteine desulfurase] + A + AMP + 2 H(+). It functions in the pathway cofactor biosynthesis; thiamine diphosphate biosynthesis. Functionally, catalyzes the ATP-dependent transfer of a sulfur to tRNA to produce 4-thiouridine in position 8 of tRNAs, which functions as a near-UV photosensor. Also catalyzes the transfer of sulfur to the sulfur carrier protein ThiS, forming ThiS-thiocarboxylate. This is a step in the synthesis of thiazole, in the thiamine biosynthesis pathway. The sulfur is donated as persulfide by IscS. The protein is Probable tRNA sulfurtransferase of Metamycoplasma arthritidis (strain 158L3-1) (Mycoplasma arthritidis).